Here is a 167-residue protein sequence, read N- to C-terminus: Biotin carboxyl carrier protein of acetyl-CoA carboxylase (167 aa).

Residues 53 to 91 form a disordered region; sequence SGFSQERPIPTDPKKDTIKETTTENSETSTTTSSGDFIS. Residues 64 to 74 are compositionally biased toward basic and acidic residues; the sequence is DPKKDTIKETT. Low complexity predominate over residues 75–86; sequence TENSETSTTTSS. One can recognise a Biotinyl-binding domain in the interval 87–163; that stretch reads GDFISSPLVG…QFGSKLFRIA (77 aa). An N6-biotinyllysine modification is found at Lys129.

As to quaternary structure, homodimer.

Its pathway is lipid metabolism; fatty acid biosynthesis. In terms of biological role, this protein is a component of the acetyl coenzyme A carboxylase complex; first, biotin carboxylase catalyzes the carboxylation of the carrier protein and then the transcarboxylase transfers the carboxyl group to form malonyl-CoA. The sequence is that of Biotin carboxyl carrier protein of acetyl-CoA carboxylase (accB) from Chlamydia pneumoniae (Chlamydophila pneumoniae).